Here is a 674-residue protein sequence, read N- to C-terminus: PTS system glucose-specific EIIBCA component (674 aa).

The PTS EIIB type-1 domain occupies 1–89 (MASKLTTTSQ…LKLDGMKHFA (89 aa)). Cys28 acts as the Phosphocysteine intermediate; for EIIB activity in catalysis. Residues 117 to 476 (EFLSDTFRPI…DAERDEAKAQ (360 aa)) form the PTS EIIC type-1 domain. The next 10 membrane-spanning stretches (helical) occupy residues 126-146 (ILWA…ADTF), 162-182 (YVFL…MVGA), 193-213 (WIGA…LGSA), 225-245 (VLND…GLYW), 260-280 (MVFV…FLLG), 303-323 (FILS…GLHW), 344-364 (PMGA…LIAL), 376-396 (LGGM…YGVL), 409-429 (GCLV…AFVF), and 442-462 (LGYT…VLFF). Residues 542 to 646 (DPIFAAGKLG…PLITPVVVSN (105 aa)) enclose the PTS EIIA type-1 domain. His594 serves as the catalytic Tele-phosphohistidine intermediate; for EIIA activity.

The protein localises to the cell membrane. The catalysed reaction is N(pros)-phospho-L-histidyl-[protein] + D-glucose(out) = D-glucose 6-phosphate(in) + L-histidyl-[protein]. The phosphoenolpyruvate-dependent sugar phosphotransferase system (sugar PTS), a major carbohydrate active transport system, catalyzes the phosphorylation of incoming sugar substrates concomitantly with their translocation across the cell membrane. This system is involved in glucose transport. In Corynebacterium glutamicum (Brevibacterium saccharolyticum), this protein is PTS system glucose-specific EIIBCA component (ptsG).